Here is an 830-residue protein sequence, read N- to C-terminus: Dimethylglycine oxidase (830 aa).

Residues 14-15 (IV), 35-36 (DQ), 45-48 (STSH), leucine 52, and valine 174 each bind FAD. Histidine 48 carries the post-translational modification Pros-8alpha-FAD histidine. Residues histidine 225 and tyrosine 259 contribute to the active site. Residues tyrosine 259 and 360–363 (VWVT) each bind FAD. Tyrosine 539 provides a ligand contact to (6S)-5,6,7,8-tetrahydrofolate. Aspartate 552 functions as the For 5,10-methylenetetrahydrofolate synthesis activity in the catalytic mechanism. (6S)-5,6,7,8-tetrahydrofolate-binding positions include threonine 554, glycine 566, and 658-660 (ELY).

This sequence belongs to the GcvT family. The cofactor is FAD.

It catalyses the reaction N,N-dimethylglycine + O2 + H2O = sarcosine + formaldehyde + H2O2. The catalysed reaction is N,N-dimethylglycine + (6S)-5,6,7,8-tetrahydrofolate + O2 = sarcosine + (6R)-5,10-methylene-5,6,7,8-tetrahydrofolate + H2O2. Functionally, catalyzes the oxidative demethylation of N,N-dimethylglycine to yield sarcosine, formaldehyde and hydrogen peroxide. The oxidation of dimethylglycine is coupled to the synthesis of 5,10-methylenetetrahydrofolate through an unusual substrate channeling mechanism. This channeling occurs by nonbiased diffusion of the iminium intermediate through a large solvent cavity connecting active site 1 (N-terminus) and active site 2 (C-terminus). The synthesis of 5,10-methylenetetrahydrofolate (at active site 2) prevents the accumulation of formaldehyde, formed by hydrolysis of the iminium intermediate product (at active site 1). Does not oxidize sarcosine. The sequence is that of Dimethylglycine oxidase (dmg) from Arthrobacter globiformis.